The sequence spans 367 residues: Ribosomal lysine N-methyltransferase 5 (367 aa).

A disordered region spans residues 55–74 (EGGRKKKRVRRRNKASSVEE). A compositionally biased stretch (basic residues) spans 58 to 68 (RKKKRVRRRNK). Residues Trp110, 170–172 (GAG), Asp192, Trp256, and Met288 contribute to the S-adenosyl-L-methionine site.

Belongs to the class I-like SAM-binding methyltransferase superfamily. RKM5 family.

Its function is as follows. S-adenosyl-L-methionine-dependent protein-lysine N-methyltransferase that monomethylates 60S ribosomal protein L1 (RPL1A and RPL1B) at 'Lys-46'. The sequence is that of Ribosomal lysine N-methyltransferase 5 (RKM5) from Saccharomyces cerevisiae (strain Lalvin EC1118 / Prise de mousse) (Baker's yeast).